The primary structure comprises 187 residues: MSSDAVDETHENARQEVIAVDADDNEEGLVNRLDAHTGDGVRHRAFTALLFDENDRILLAQRAANKRLWDTHWDGTVASHPVEGQTQVEATEERLEEELGVDPSQYQNLRVTDRFEYKRYYENAGLEWEVCAVLQATLHDTSLEPNPEEVDGLMWVPYERLREHPEYYRQLRLCPWFEIAMRRDEER.

His-36, His-43, and His-80 together coordinate Mn(2+). Positions 41–178 constitute a Nudix hydrolase domain; the sequence is VRHRAFTALL…RQLRLCPWFE (138 aa). Mg(2+) is bound at residue Glu-98. Positions 127 and 129 each coordinate Mn(2+). Residue Glu-129 is part of the active site.

Belongs to the IPP isomerase type 1 family. Mg(2+) serves as cofactor. It depends on Mn(2+) as a cofactor.

The protein localises to the cytoplasm. It catalyses the reaction isopentenyl diphosphate = dimethylallyl diphosphate. The protein operates within isoprenoid biosynthesis; dimethylallyl diphosphate biosynthesis; dimethylallyl diphosphate from isopentenyl diphosphate: step 1/1. In terms of biological role, catalyzes the 1,3-allylic rearrangement of the homoallylic substrate isopentenyl (IPP) to its highly electrophilic allylic isomer, dimethylallyl diphosphate (DMAPP). The polypeptide is Isopentenyl-diphosphate Delta-isomerase (Haloarcula marismortui (strain ATCC 43049 / DSM 3752 / JCM 8966 / VKM B-1809) (Halobacterium marismortui)).